The following is a 349-amino-acid chain: Adenine deaminase (349 aa).

Residues H24, H26, and H204 each coordinate Zn(2+). The active-site Proton donor is the E207. Position 285 (D285) interacts with Zn(2+). D286 provides a ligand contact to substrate.

Belongs to the metallo-dependent hydrolases superfamily. Adenosine and AMP deaminases family. Adenine deaminase type 2 subfamily. The cofactor is Zn(2+).

The enzyme catalyses adenine + H2O + H(+) = hypoxanthine + NH4(+). Functionally, catalyzes the hydrolytic deamination of adenine to hypoxanthine. Plays an important role in the purine salvage pathway and in nitrogen catabolism. The sequence is that of Adenine deaminase from Trichlorobacter lovleyi (strain ATCC BAA-1151 / DSM 17278 / SZ) (Geobacter lovleyi).